Consider the following 256-residue polypeptide: MAGVITASEPSWIAPFSGLSPRQFGKLVTVLRREGADAVRKGRPWSLPLEDRALLVAAYWRTNLTMRQLAPLFGVSKSAADRIIDHLGPMLALQPRKRFAKDTVLIVDGTLVPTRDHTIAERSKNYRYSTNHQVVIDADTRLVVVVGRPLAGNRNDCKAWEESGAKAAVGKTLTIADGGYPGTGLVIPHRRERGQAGLPDWKEEHNKSHKQVRARVEHVFARMKTWKILRDCRLKGDGVHHAMLGIARMHNLALTG.

The protein belongs to the transposase 11 family.

Involved in the transposition of the insertion sequence IS112 which inactivates the SalI restriction-modification system. This is Putative transposase for insertion sequence element IS112 from Streptomyces albus G.